Consider the following 346-residue polypeptide: Putative glycosyltransferase HI_0523 (346 aa).

It belongs to the glycosyltransferase 9 family.

This chain is Putative glycosyltransferase HI_0523, found in Haemophilus influenzae (strain ATCC 51907 / DSM 11121 / KW20 / Rd).